A 158-amino-acid chain; its full sequence is Putative metalloproteinase inhibitor tag-225 (158 aa).

Positions 1 to 20 are cleaved as a signal peptide; sequence MQNLSLSLVILSVLIAVTLA. Position 21 (cysteine 21) interacts with Zn(2+). The interval 21–25 is involved in metalloproteinase-binding; the sequence is CKCRE. Cystine bridges form between cysteine 21–cysteine 96, cysteine 23–cysteine 123, and cysteine 33–cysteine 158. The NTR domain maps to 21–158; that stretch reads CKCREQSTKE…LQSQVKSIKC (138 aa). Asparagine 79 is a glycosylation site (N-linked (GlcNAc...) asparagine). Residues 93 to 94 are involved in metalloproteinase-binding; sequence AP.

This sequence belongs to the protease inhibitor I35 (TIMP) family.

The protein resides in the secreted. Its function is as follows. Complexes with metalloproteinases and irreversibly inactivates them by binding to their catalytic zinc cofactor. This is Putative metalloproteinase inhibitor tag-225 (tag-225) from Caenorhabditis elegans.